Here is a 206-residue protein sequence, read N- to C-terminus: Large ribosomal subunit protein uL4 (206 aa).

The protein belongs to the universal ribosomal protein uL4 family. In terms of assembly, part of the 50S ribosomal subunit.

In terms of biological role, one of the primary rRNA binding proteins, this protein initially binds near the 5'-end of the 23S rRNA. It is important during the early stages of 50S assembly. It makes multiple contacts with different domains of the 23S rRNA in the assembled 50S subunit and ribosome. Functionally, forms part of the polypeptide exit tunnel. In Methylobacterium radiotolerans (strain ATCC 27329 / DSM 1819 / JCM 2831 / NBRC 15690 / NCIMB 10815 / 0-1), this protein is Large ribosomal subunit protein uL4.